Consider the following 122-residue polypeptide: Large ribosomal subunit protein uL14 (122 aa).

This sequence belongs to the universal ribosomal protein uL14 family. In terms of assembly, part of the 50S ribosomal subunit. Forms a cluster with proteins L3 and L19. In the 70S ribosome, L14 and L19 interact and together make contacts with the 16S rRNA in bridges B5 and B8.

Its function is as follows. Binds to 23S rRNA. Forms part of two intersubunit bridges in the 70S ribosome. This chain is Large ribosomal subunit protein uL14, found in Streptococcus suis (strain 05ZYH33).